We begin with the raw amino-acid sequence, 51 residues long: Large ribosomal subunit protein bL33 (51 aa).

The tract at residues 1–20 (MRDKIRLNSSAGTGHFYTTD) is disordered.

It belongs to the bacterial ribosomal protein bL33 family.

This chain is Large ribosomal subunit protein bL33, found in Psychromonas ingrahamii (strain DSM 17664 / CCUG 51855 / 37).